The chain runs to 169 residues: Zinc metalloproteinase-disintegrin-like mikarin (169 aa).

Positions 14-57 (KYLEYVVVDNNMYRNYGNAGPCVMSAEISFEPLQEFSSCDIQEP) constitute a Peptidase M12B domain. The Disintegrin domain maps to 65 to 129 (PAVCGNYYVE…PEICTGRSAK (65 aa)). Cystine bridges form between Cys-68/Cys-97, Cys-79/Cys-92, Cys-81/Cys-87, Cys-105/Cys-111, Cys-110/Cys-123, and Cys-150/Cys-161. The D/ECD-tripeptide motif lies at 116 to 118 (DCD).

Belongs to the venom metalloproteinase (M12B) family. P-III subfamily. P-IIIa sub-subfamily. As to quaternary structure, monomer. Zn(2+) serves as cofactor. Expressed by the venom gland.

It localises to the secreted. Its activity is regulated as follows. Inhibited by EDTA, but not by PMSF. Functionally, snake venom zinc metalloproteinase that calcium-independently catalyzes the conversion of prothrombin (F2) to alpha-thrombin through the formation of a thrombin intermediate. In Micropechis ikaheca (New Guinean small-eyed snake), this protein is Zinc metalloproteinase-disintegrin-like mikarin.